Here is a 665-residue protein sequence, read N- to C-terminus: GTPase IMAP family member 8 (665 aa).

The 203-residue stretch at methionine 8–arginine 210 folds into the AIG1-type G 1 domain. The interval glycine 17–serine 24 is G1. GTP is bound by residues glycine 17 to alanine 25 and serine 38. The G2 stretch occupies residues threonine 44–methionine 48. Positions aspartate 65 to aspartate 68 are G3. Residues threonine 134–aspartate 137 are G4. GTP contacts are provided by residues arginine 135 to aspartate 137 and asparagine 170. Residues asparagine 169–lysine 171 form a G5 region. A disordered region spans residues glutamate 217–serine 246. Residues glutamate 222–glutamine 233 show a composition bias toward basic and acidic residues. A compositionally biased stretch (polar residues) spans leucine 234–serine 246. 2 consecutive AIG1-type G domains span residues threonine 245–glutamate 435 and lysine 436–isoleucine 644. Coiled-coil stretches lie at residues asparagine 400–glycine 427 and glutamine 608–leucine 657.

Belongs to the TRAFAC class TrmE-Era-EngA-EngB-Septin-like GTPase superfamily. AIG1/Toc34/Toc159-like paraseptin GTPase family. IAN subfamily. As to expression, expressed in the spleen, intestine, liver, and colon, as well as in lung, placenta, kidney, muscle, and heart. Extremely low expression, if any, in brain, in thymus, bone marrow, and blood leukocytes. Detected in T-cells.

It localises to the endoplasmic reticulum. It is found in the golgi apparatus. The protein localises to the mitochondrion. Its subcellular location is the cytoplasm. The protein resides in the cytosol. Its function is as follows. Exerts an anti-apoptotic effect in the immune system and is involved in responses to infections. The protein is GTPase IMAP family member 8 (GIMAP8) of Homo sapiens (Human).